The following is a 569-amino-acid chain: Neutral leucine aminopeptidase, chloroplastic (569 aa).

Residues 1-48 (MNGVLCSSSSSFHSYPSIFTKFQSSPIWSFSISVTPLCSRRAKRMAHS) constitute a chloroplast transit peptide. The Mn(2+) site is built by lysine 339 and aspartate 344. Residue lysine 351 is part of the active site. Positions 364, 424, and 426 each coordinate Mn(2+). The active site involves arginine 428.

The protein belongs to the peptidase M17 family. Homohexamer (dimer of homotrimers). Requires Mn(2+) as cofactor. As to expression, expressed constitutively at low levels. Expressed in vegetative and reproductive organs, including leaves, stems, roots, cotyledons (after imbibition), pistils, sepals, petals, stamens, and floral buds (at protein level). Present at very low levels in healthy leaves.

It is found in the plastid. Its subcellular location is the chloroplast. The catalysed reaction is Release of an N-terminal amino acid, Xaa-|-Yaa-, in which Xaa is preferably Leu, but may be other amino acids including Pro although not Arg or Lys, and Yaa may be Pro. Amino acid amides and methyl esters are also readily hydrolyzed, but rates on arylamides are exceedingly low.. The enzyme catalyses Release of N-terminal proline from a peptide.. Functionally, catalyzes the removal of unsubstituted N-terminal amino acids from various peptides. When associated as homohexamer, catalyzes the proteolyzes of Xaa-Leu dipeptides. Possesses leucine aminopeptidase activity against the model substrate leucine-amido methyl coumarin. Presumably involved in the processing and regular turnover of intracellular proteins. In terms of biological role, functions as a molecular chaperone to protect proteins from heat-induced damage. This Solanum lycopersicum (Tomato) protein is Neutral leucine aminopeptidase, chloroplastic.